The primary structure comprises 434 residues: Zinc finger CCCH domain-containing protein 10 (434 aa).

Residues 1–37 (MPDRDSYANGTGSSGGGPGGGGSEEASGAGVGSGGAS) form a disordered region. The span at 12 to 35 (GSSGGGPGGGGSEEASGAGVGSGG) shows a compositional bias: gly residues. C3H1-type zinc fingers lie at residues 36-63 (ASSD…HPDM), 73-99 (KNEF…HGSK), and 134-161 (KEEV…HLQR). Residues Arg-185 and Arg-186 each carry the omega-N-methylarginine modification. Residues 196-207 (PDRGFEDHEPGP) show a composition bias toward basic and acidic residues. Positions 196-217 (PDRGFEDHEPGPKRRRGGCCPP) are disordered. The stretch at 234–280 (GVECRLLEEENAMLRKRVEELKKQVSNLLATNEVLLEQNAQFRNQAK) forms a coiled coil. The segment covering 314-330 (TTLSSQALQPRPVSQQE) has biased composition (polar residues). The disordered stretch occupies residues 314–362 (TTLSSQALQPRPVSQQELVAPAGAPAAPPTNAAPPAAPPPPPPHLTPEI). The segment covering 339 to 358 (AAPPTNAAPPAAPPPPPPHL) has biased composition (pro residues).

It localises to the nucleus. Functionally, specific regulator of miRNA biogenesis. Binds, via the C3H1-type zinc finger domains, to the binding motif 5'-GCAGCGC-3' on microRNA pri-MIR143 and negatively regulates the processing to mature microRNA. This Homo sapiens (Human) protein is Zinc finger CCCH domain-containing protein 10 (ZC3H10).